The primary structure comprises 681 residues: Structure-specific endonuclease subunit SLX4 (681 aa).

Disordered regions lie at residues 239 to 305 (EREK…QEQL) and 505 to 528 (EVTGEAEDGPSIIQVPSSPGNENL). Positions 251–261 (SDSSPEPTQLL) are enriched in polar residues. Positions 265–281 (IIEEEHEVDEEEEDNEN) are enriched in acidic residues. 2 stretches are compositionally biased toward polar residues: residues 288-305 (QLASSPTQISSDDTQEQL) and 518-528 (QVPSSPGNENL).

Belongs to the SLX4 family. As to quaternary structure, forms a heterodimer with SLX1. In terms of processing, phosphorylated in response to DNA damage.

Its subcellular location is the nucleus. In terms of biological role, regulatory subunit of the SLX1-SLX4 structure-specific endonuclease that resolves DNA secondary structures generated during DNA repair and recombination. Has endonuclease activity towards branched DNA substrates, introducing single-strand cuts in duplex DNA close to junctions with ss-DNA. In Meyerozyma guilliermondii (strain ATCC 6260 / CBS 566 / DSM 6381 / JCM 1539 / NBRC 10279 / NRRL Y-324) (Yeast), this protein is Structure-specific endonuclease subunit SLX4.